A 334-amino-acid chain; its full sequence is 6-phosphogluconolactonase (334 aa).

This sequence belongs to the cycloisomerase 2 family.

The catalysed reaction is 6-phospho-D-glucono-1,5-lactone + H2O = 6-phospho-D-gluconate + H(+). Its pathway is carbohydrate degradation; pentose phosphate pathway; D-ribulose 5-phosphate from D-glucose 6-phosphate (oxidative stage): step 2/3. Catalyzes the hydrolysis of 6-phosphogluconolactone to 6-phosphogluconate. This Buchnera aphidicola subsp. Acyrthosiphon pisum (strain 5A) protein is 6-phosphogluconolactonase.